The primary structure comprises 638 residues: Chaperone protein DnaK (638 aa).

Thr198 bears the Phosphothreonine; by autocatalysis mark. The disordered stretch occupies residues 600-638 (KTQTEGGAQPGAEADGDTGAKGGEKVVDADFEEVKDDKK). The span at 628-638 (ADFEEVKDDKK) shows a compositional bias: acidic residues.

The protein belongs to the heat shock protein 70 family.

In terms of biological role, acts as a chaperone. The chain is Chaperone protein DnaK from Geobacter metallireducens (strain ATCC 53774 / DSM 7210 / GS-15).